We begin with the raw amino-acid sequence, 432 residues long: D-amino acid dehydrogenase (432 aa).

Position 3-17 (3-17 (VVILGSGVVGVASAW)) interacts with FAD.

This sequence belongs to the DadA oxidoreductase family. It depends on FAD as a cofactor.

It catalyses the reaction a D-alpha-amino acid + A + H2O = a 2-oxocarboxylate + AH2 + NH4(+). Its pathway is amino-acid degradation; D-alanine degradation; NH(3) and pyruvate from D-alanine: step 1/1. Oxidative deamination of D-amino acids. This is D-amino acid dehydrogenase from Escherichia coli O45:K1 (strain S88 / ExPEC).